A 213-amino-acid chain; its full sequence is Thymidylate kinase (213 aa).

ATP is bound at residue 10 to 17 (GLEGAGKT).

Belongs to the thymidylate kinase family.

The catalysed reaction is dTMP + ATP = dTDP + ADP. Its function is as follows. Phosphorylation of dTMP to form dTDP in both de novo and salvage pathways of dTTP synthesis. The protein is Thymidylate kinase of Salmonella arizonae (strain ATCC BAA-731 / CDC346-86 / RSK2980).